The primary structure comprises 60 residues: Ras-related protein Rab-2A (60 aa).

Serine 1, cysteine 2, and threonine 19 together coordinate GTP. Serine 1 is a Mg(2+) binding site. Residues 16–24 carry the Effector region motif; the sequence is HDLTIGVEF. A Mg(2+)-binding site is contributed by threonine 19.

The protein belongs to the small GTPase superfamily. Rab family. Interacts with PRKCI. Interacts with TRIP11. Interacts (in GTP-bound form) with GARIN1B. Interacts (GTP-bound) with HOPS complex component VPS39; interaction contributes to obtaining a functional HOPS complex that promotes autophagosome-lysosome membrane fusion driven by STX17-SNAP29-VAMP8. May interact with VPS41. Mg(2+) is required as a cofactor. Post-translationally, prenylated. Prenylation is required for association with cellular membranes.

It localises to the endoplasmic reticulum-Golgi intermediate compartment membrane. Its subcellular location is the melanosome. The protein localises to the endoplasmic reticulum membrane. It is found in the golgi apparatus membrane. The protein resides in the cytoplasmic vesicle. It localises to the secretory vesicle. Its subcellular location is the acrosome. The protein localises to the autophagosome membrane. It catalyses the reaction GTP + H2O = GDP + phosphate + H(+). Its activity is regulated as follows. Regulated by guanine nucleotide exchange factors (GEFs) which promote the exchange of bound GDP for free GTP, GTPase activating proteins (GAPs) which increase the GTP hydrolysis activity, and GDP dissociation inhibitors (GDIs) which inhibit the dissociation of the nucleotide from the GTPase. Functionally, the small GTPases Rab are key regulators of intracellular membrane trafficking, from the formation of transport vesicles to their fusion with membranes. Rabs cycle between active GTP-bound and inactive GDP-bound states. In their active state, drive transport of vesicular carriers from donor organelles to acceptor organelles to regulate the membrane traffic that maintains organelle identity and morphology. RAB2A regulates autophagy by promoting autophagosome-lysosome fusion via recruitment of the HOPS endosomal tethering complex; this process involves autophagosomal RAB2A and lysosomal RAB39A recruitment of HOPS subcomplexes VPS39-VPS11 and VPS41-VPS16-VPS18-VPS33A, respectively, which assemble into a functional complex to mediate membrane tethering and SNAREs-driven membrane fusion. Required for protein transport from the endoplasmic reticulum to the Golgi complex. Regulates the compacted morphology of the Golgi. Together with RAB2B, redundantly required for efficient autophagic flux. This is Ras-related protein Rab-2A from Mesocricetus auratus (Golden hamster).